Consider the following 487-residue polypeptide: Aspartyl/glutamyl-tRNA(Asn/Gln) amidotransferase subunit B (487 aa).

This sequence belongs to the GatB/GatE family. GatB subfamily. Heterotrimer of A, B and C subunits.

It carries out the reaction L-glutamyl-tRNA(Gln) + L-glutamine + ATP + H2O = L-glutaminyl-tRNA(Gln) + L-glutamate + ADP + phosphate + H(+). The catalysed reaction is L-aspartyl-tRNA(Asn) + L-glutamine + ATP + H2O = L-asparaginyl-tRNA(Asn) + L-glutamate + ADP + phosphate + 2 H(+). Its function is as follows. Allows the formation of correctly charged Asn-tRNA(Asn) or Gln-tRNA(Gln) through the transamidation of misacylated Asp-tRNA(Asn) or Glu-tRNA(Gln) in organisms which lack either or both of asparaginyl-tRNA or glutaminyl-tRNA synthetases. The reaction takes place in the presence of glutamine and ATP through an activated phospho-Asp-tRNA(Asn) or phospho-Glu-tRNA(Gln). This is Aspartyl/glutamyl-tRNA(Asn/Gln) amidotransferase subunit B from Chlamydia abortus (strain DSM 27085 / S26/3) (Chlamydophila abortus).